Here is a 130-residue protein sequence, read N- to C-terminus: MATRHQARTAVVGLLYAYDLGNENIAKFSDEILEEDKIRNKQRDFSHDLFDGTIENLEMLDAEIEKHLTDWDYDAIGRVEKAILRLGAYEILVAKTDRAIIINEAVELAKSLADEKSPQFINGVLDAIGK.

The protein belongs to the NusB family.

Involved in transcription antitermination. Required for transcription of ribosomal RNA (rRNA) genes. Binds specifically to the boxA antiterminator sequence of the ribosomal RNA (rrn) operons. The protein is Transcription antitermination protein NusB of Sulfurovum sp. (strain NBC37-1).